The following is a 535-amino-acid chain: MFFVGVAVLAALQSVWGNGGLETNEVAGMDRLGVESQKENPPGILLRKDDGMCEARKPMDMSPGEVQTETKTVVKEIVVEIEEPREGIQEVLPVVQYEGQAKVSAGNDLLKPSCGVSSGFTSSAERCYVLTKDAHDGDTSKMISLVESLSGRVKRQYTKNITGVSFCSSHSDVLRKVDDAGMHVEEDKIYTVSMLQNNIPNYMYLMRHYENTIFNNYFYDNWIFRVLQIKRVMTKFLGSYEYYHTGKGVNIFLLDTAISSMDGACNLSGRLEACNAHGNVMAELLVGKTNGFAKDSRLSVLDVVDCDGKVALSEMIHGLEGLRESGGPSILVFGVSGPYSASLNSAVDRISSRGTVVVSPAGNSHDQSCNYSPGSSKSVINVGSVDKHAGISRFSNHGDCIRMFAPGEDVLQDSSLTGTSLSAAIVASSIALFLETSPRAAFPQIWGYLNQNSFWNSRGSYSVLKIPRLGCKGRIRGSIFRLGGLYEDIVPLVFVVLITSALLYLLLIGIRRFRRRREQELHDEDVLFDPPVDRF.

A signal peptide spans Met1 to Gly17. One can recognise a Peptidase S8 domain in the interval Asn221–Ile475. Residues Asp255 and His277 each act as charge relay system in the active site. Residues Cys369 and Cys400 are joined by a disulfide bond. Ser420 functions as the Charge relay system in the catalytic mechanism. Residues Ile489–Gly509 form a helical membrane-spanning segment.

It belongs to the peptidase S8 family.

The protein resides in the membrane. Functionally, may be involved in the degradation of proteins for nutrient acquisition or possess a regulatory function by proteolytic activation of proproteins. The chain is Putative subtilisin-like proteinase 2 (SPL2) from Encephalitozoon cuniculi (strain GB-M1) (Microsporidian parasite).